Here is a 615-residue protein sequence, read N- to C-terminus: Forkhead box protein O (615 aa).

Disordered regions lie at residues 39–77 (RARSNTWPCPRPENFVEPTDELDSTKASNQQLAPGDSQQ), 182–205 (KSVRRRAASMETSRYEKRRGRAKK), 217–269 (GLND…RLSP), 318–359 (FSAA…APGY), and 389–409 (NSVTTTMSPAYPNSEPSSDSL). Position 44 is a phosphothreonine; by PKB/AKT1 (T44). Over residues 63–77 (TKASNQQLAPGDSQQ) the composition is skewed to polar residues. Residue S75 is modified to Phosphoserine. Residues 95 to 201 (WGNLSYADLI…ETSRYEKRRG (107 aa)) constitute a DNA-binding region (fork-head). The residue at position 190 (S190) is a Phosphoserine; by PKB/AKT1. 2 stretches are compositionally biased toward polar residues: residues 221-230 (ATPSPSSSVS) and 256-265 (RASSNASSCG). S259 carries the phosphoserine; by PKB/AKT1 modification. Residues S262, S263, and S268 each carry the phosphoserine modification. Residues 326–335 (SQPPPPPYQP) are compositionally biased toward pro residues. A compositionally biased stretch (low complexity) spans 336–351 (PQHQQAQQQQQQSPYA).

Interacts with melt.

Its subcellular location is the cytoplasm. The protein localises to the nucleus. Functionally, transcription factor involved in the regulation of the insulin signaling pathway. Consistently activates both the downstream target Thor\d4EBP and the feedback control target InR. Involved in negative regulation of the cell cycle, modulating cell growth and proliferation. In response to cellular stresses, such as nutrient deprivation or increased levels of reactive oxygen species, foxo is activated and inhibits growth through the action of target genes such as Thor. Foxo activated in the adult fat body can regulate lifespan in adults; an insulin peptide itself may function as one secondary messenger of insulin-regulated aging. Also regulates Lip4, homolog of human acid lipases, thereby acting as a key modulator of lipid metabolism by insulin signaling and integrates insulin responses to glucose and lipid homeostasis. This chain is Forkhead box protein O, found in Drosophila erecta (Fruit fly).